A 133-amino-acid chain; its full sequence is ATP synthase epsilon chain (133 aa).

It belongs to the ATPase epsilon chain family. As to quaternary structure, F-type ATPases have 2 components, CF(1) - the catalytic core - and CF(0) - the membrane proton channel. CF(1) has five subunits: alpha(3), beta(3), gamma(1), delta(1), epsilon(1). CF(0) has three main subunits: a, b and c.

It localises to the cell membrane. Produces ATP from ADP in the presence of a proton gradient across the membrane. This is ATP synthase epsilon chain from Clostridium botulinum (strain Langeland / NCTC 10281 / Type F).